The sequence spans 366 residues: tRNA/tmRNA (uracil-C(5))-methyltransferase (366 aa).

The S-adenosyl-L-methionine site is built by Q189, Y217, N222, E238, and D298. Residue C323 is the Nucleophile of the active site. The active-site Proton acceptor is E357.

Belongs to the class I-like SAM-binding methyltransferase superfamily. RNA M5U methyltransferase family. TrmA subfamily.

The catalysed reaction is uridine(54) in tRNA + S-adenosyl-L-methionine = 5-methyluridine(54) in tRNA + S-adenosyl-L-homocysteine + H(+). The enzyme catalyses uridine(341) in tmRNA + S-adenosyl-L-methionine = 5-methyluridine(341) in tmRNA + S-adenosyl-L-homocysteine + H(+). Dual-specificity methyltransferase that catalyzes the formation of 5-methyluridine at position 54 (m5U54) in all tRNAs, and that of position 341 (m5U341) in tmRNA (transfer-mRNA). The polypeptide is tRNA/tmRNA (uracil-C(5))-methyltransferase (Shewanella oneidensis (strain ATCC 700550 / JCM 31522 / CIP 106686 / LMG 19005 / NCIMB 14063 / MR-1)).